Consider the following 402-residue polypeptide: CCA-adding enzyme (402 aa).

ATP contacts are provided by glycine 32 and arginine 35. CTP-binding residues include glycine 32 and arginine 35. 2 residues coordinate Mg(2+): aspartate 45 and aspartate 47. The ATP site is built by arginine 116, aspartate 159, arginine 162, arginine 165, and arginine 168. Residues arginine 116, aspartate 159, arginine 162, arginine 165, and arginine 168 each contribute to the CTP site.

It belongs to the tRNA nucleotidyltransferase/poly(A) polymerase family. Bacterial CCA-adding enzyme type 3 subfamily. In terms of assembly, homodimer. It depends on Mg(2+) as a cofactor.

The enzyme catalyses a tRNA precursor + 2 CTP + ATP = a tRNA with a 3' CCA end + 3 diphosphate. It carries out the reaction a tRNA with a 3' CCA end + 2 CTP + ATP = a tRNA with a 3' CCACCA end + 3 diphosphate. Catalyzes the addition and repair of the essential 3'-terminal CCA sequence in tRNAs without using a nucleic acid template. Adds these three nucleotides in the order of C, C, and A to the tRNA nucleotide-73, using CTP and ATP as substrates and producing inorganic pyrophosphate. tRNA 3'-terminal CCA addition is required both for tRNA processing and repair. Also involved in tRNA surveillance by mediating tandem CCA addition to generate a CCACCA at the 3' terminus of unstable tRNAs. While stable tRNAs receive only 3'-terminal CCA, unstable tRNAs are marked with CCACCA and rapidly degraded. The chain is CCA-adding enzyme from Streptococcus pyogenes serotype M6 (strain ATCC BAA-946 / MGAS10394).